A 162-amino-acid chain; its full sequence is Ribose-5-phosphate isomerase B (162 aa).

Residues 11–12 and 70–74 contribute to the D-ribulose 5-phosphate site; these read DH and GSGNG. E75 (proton acceptor) is an active-site residue. H102 functions as the Proton donor in the catalytic mechanism. Positions 103, 113, 137, and 141 each coordinate D-ribulose 5-phosphate.

Belongs to the LacAB/RpiB family. As to quaternary structure, homodimer.

It catalyses the reaction aldehydo-D-ribose 5-phosphate = D-ribulose 5-phosphate. It functions in the pathway carbohydrate degradation; pentose phosphate pathway; D-ribose 5-phosphate from D-ribulose 5-phosphate (non-oxidative stage): step 1/1. Its function is as follows. Catalyzes the interconversion of ribulose-5-P and ribose-5-P. The protein is Ribose-5-phosphate isomerase B of Mycobacterium bovis (strain ATCC BAA-935 / AF2122/97).